A 169-amino-acid polypeptide reads, in one-letter code: Aspartic protease inhibitor 6 (169 aa).

N1 carries N-linked (GlcNAc...) asparagine glycosylation. 2 disulfides stabilise this stretch: C30-C75 and C124-C134.

The protein belongs to the protease inhibitor I3 (leguminous Kunitz-type inhibitor) family.

The protein localises to the vacuole. Functionally, inhibitor of cathepsin D (aspartic protease). May also inhibit trypsin and chymotrypsin (serine proteases). Protects the plant by inhibiting proteases of invading organisms. This is Aspartic protease inhibitor 6 from Solanum tuberosum (Potato).